A 364-amino-acid chain; its full sequence is Mitogen-activated protein kinase 11 (364 aa).

Residues 24–308 (LQGLRPVGSG…AAEALAHAYF (285 aa)) enclose the Protein kinase domain. Residues 30 to 38 (VGSGAYGSV) and K53 each bind ATP. E71 provides a ligand contact to nilotinib. The active-site Proton acceptor is D150. T180 is modified (phosphothreonine; by MAP2K3, MAP2K4 and MAP2K6). A TXY motif is present at residues 180 to 182 (TGY). Position 182 is a phosphotyrosine; by MAP2K3, MAP2K4 and MAP2K6 (Y182). Disordered stretches follow at residues 311–331 (YHDPEDEPEAEPYDESVEAKE) and 343–364 (QEVLSFKPPEPPKPPGSLEIEQ). Over residues 314–326 (PEDEPEAEPYDES) the composition is skewed to acidic residues. Position 323 is a phosphotyrosine; by ZAP70 (Y323).

The protein belongs to the protein kinase superfamily. CMGC Ser/Thr protein kinase family. MAP kinase subfamily. As to quaternary structure, interacts with HDAC3 and DUSP16. Mg(2+) is required as a cofactor. In terms of processing, dually phosphorylated on Thr-180 and Tyr-182 by MAP2K3/MKK3, MAP2K4/MKK4 and MAP2K6/MKK6, which activates the enzyme. As to expression, highest levels in the brain and heart. Also expressed in the placenta, lung, liver, skeletal muscle, kidney and pancreas.

The protein localises to the cytoplasm. It localises to the nucleus. The enzyme catalyses L-seryl-[protein] + ATP = O-phospho-L-seryl-[protein] + ADP + H(+). It catalyses the reaction L-threonyl-[protein] + ATP = O-phospho-L-threonyl-[protein] + ADP + H(+). Its activity is regulated as follows. Activated by phosphorylation on threonine and tyrosine by MAP2K3/MKK3, MAP2K4/MKK4 and MAP2K6/MKK6. MAP2K3/MKK3 and MAP2K6/MKK6 are both essential for the activation of MAPK11 induced by environmental stress. HDAC3 interacts directly and selectively with MAPK11 to repress ATF2 transcriptional activity, and regulate TNF gene expression in LPS-stimulated cells. Inhibited by SB203580 and pyridinyl-imidazole related compounds. In terms of biological role, serine/threonine kinase which acts as an essential component of the MAP kinase signal transduction pathway. MAPK11 is one of the four p38 MAPKs which play an important role in the cascades of cellular responses evoked by extracellular stimuli such as pro-inflammatory cytokines or physical stress leading to direct activation of transcription factors. Accordingly, p38 MAPKs phosphorylate a broad range of proteins and it has been estimated that they may have approximately 200 to 300 substrates each. MAPK11 functions are mostly redundant with those of MAPK14. Some of the targets are downstream kinases which are activated through phosphorylation and further phosphorylate additional targets. RPS6KA5/MSK1 and RPS6KA4/MSK2 can directly phosphorylate and activate transcription factors such as CREB1, ATF1, the NF-kappa-B isoform RELA/NFKB3, STAT1 and STAT3, but can also phosphorylate histone H3 and the nucleosomal protein HMGN1. RPS6KA5/MSK1 and RPS6KA4/MSK2 play important roles in the rapid induction of immediate-early genes in response to stress or mitogenic stimuli, either by inducing chromatin remodeling or by recruiting the transcription machinery. On the other hand, two other kinase targets, MAPKAPK2/MK2 and MAPKAPK3/MK3, participate in the control of gene expression mostly at the post-transcriptional level, by phosphorylating ZFP36 (tristetraprolin) and ELAVL1, and by regulating EEF2K, which is important for the elongation of mRNA during translation. MKNK1/MNK1 and MKNK2/MNK2, two other kinases activated by p38 MAPKs, regulate protein synthesis by phosphorylating the initiation factor EIF4E2. In the cytoplasm, the p38 MAPK pathway is an important regulator of protein turnover. For example, CFLAR is an inhibitor of TNF-induced apoptosis whose proteasome-mediated degradation is regulated by p38 MAPK phosphorylation. Ectodomain shedding of transmembrane proteins is regulated by p38 MAPKs as well. In response to inflammatory stimuli, p38 MAPKs phosphorylate the membrane-associated metalloprotease ADAM17. Such phosphorylation is required for ADAM17-mediated ectodomain shedding of TGF-alpha family ligands, which results in the activation of EGFR signaling and cell proliferation. Additional examples of p38 MAPK substrates are the FGFR1. FGFR1 can be translocated from the extracellular space into the cytosol and nucleus of target cells, and regulates processes such as rRNA synthesis and cell growth. FGFR1 translocation requires p38 MAPK activation. In the nucleus, many transcription factors are phosphorylated and activated by p38 MAPKs in response to different stimuli. Classical examples include ATF1, ATF2, ATF6, ELK1, PTPRH, DDIT3, TP53/p53 and MEF2C and MEF2A. The p38 MAPKs are emerging as important modulators of gene expression by regulating chromatin modifiers and remodelers. The promoters of several genes involved in the inflammatory response, such as IL6, IL8 and IL12B, display a p38 MAPK-dependent enrichment of histone H3 phosphorylation on 'Ser-10' (H3S10ph) in LPS-stimulated myeloid cells. This phosphorylation enhances the accessibility of the cryptic NF-kappa-B-binding sites marking promoters for increased NF-kappa-B recruitment. Phosphorylates NLRP1 downstream of MAP3K20/ZAK in response to UV-B irradiation and ribosome collisions, promoting activation of the NLRP1 inflammasome and pyroptosis. Phosphorylates methyltransferase DOT1L on 'Ser-834', 'Thr-900', 'Ser-902', 'Thr-984', 'Ser-1001', 'Ser-1009' and 'Ser-1104'. In Homo sapiens (Human), this protein is Mitogen-activated protein kinase 11 (MAPK11).